The sequence spans 89 residues: Putative sodium channel toxin Ts30 (89 aa).

The signal sequence occupies residues 1–17 (MFKLAIILALLFFGARA). One can recognise an LCN-type CS-alpha/beta domain in the interval 21–85 (RDGYPILSDG…FGDSGTPECH (65 aa)). 4 cysteine pairs are disulfide-bonded: C31–C84, C35–C59, C44–C64, and C48–C66.

Expressed by the venom gland.

It localises to the secreted. This is Putative sodium channel toxin Ts30 from Tityus serrulatus (Brazilian scorpion).